Reading from the N-terminus, the 364-residue chain is Aminomethyltransferase (364 aa).

This sequence belongs to the GcvT family. In terms of assembly, the glycine cleavage system is composed of four proteins: P, T, L and H.

It catalyses the reaction N(6)-[(R)-S(8)-aminomethyldihydrolipoyl]-L-lysyl-[protein] + (6S)-5,6,7,8-tetrahydrofolate = N(6)-[(R)-dihydrolipoyl]-L-lysyl-[protein] + (6R)-5,10-methylene-5,6,7,8-tetrahydrofolate + NH4(+). The glycine cleavage system catalyzes the degradation of glycine. The protein is Aminomethyltransferase of Bacillus licheniformis (strain ATCC 14580 / DSM 13 / JCM 2505 / CCUG 7422 / NBRC 12200 / NCIMB 9375 / NCTC 10341 / NRRL NRS-1264 / Gibson 46).